Reading from the N-terminus, the 232-residue chain is tRNA (guanine-N(7)-)-methyltransferase (232 aa).

Residues Glu63, Glu88, Asp115, and Asp137 each contribute to the S-adenosyl-L-methionine site. Asp137 is an active-site residue. Substrate contacts are provided by residues Lys141, Asp173, and 211 to 214 (TRYE).

It belongs to the class I-like SAM-binding methyltransferase superfamily. TrmB family.

The enzyme catalyses guanosine(46) in tRNA + S-adenosyl-L-methionine = N(7)-methylguanosine(46) in tRNA + S-adenosyl-L-homocysteine. The protein operates within tRNA modification; N(7)-methylguanine-tRNA biosynthesis. Functionally, catalyzes the formation of N(7)-methylguanine at position 46 (m7G46) in tRNA. In Rhizobium meliloti (strain 1021) (Ensifer meliloti), this protein is tRNA (guanine-N(7)-)-methyltransferase.